A 191-amino-acid chain; its full sequence is Corticoliberin (191 aa).

The first 24 residues, Met-1–Ala-24, serve as a signal peptide directing secretion. A propeptide spanning residues Leu-25–Arg-148 is cleaved from the precursor. Positions Pro-115 to Pro-153 are disordered. Positions Glu-141 to Glu-151 are enriched in basic and acidic residues. Ile-189 bears the Isoleucine amide mark.

The protein belongs to the sauvagine/corticotropin-releasing factor/urotensin I family. In terms of assembly, interacts (via C-terminus) with CRFR1 (via N-terminal extracellular domain). In terms of tissue distribution, produced by the hypothalamus.

The protein localises to the secreted. Its function is as follows. Hormone regulating the release of corticotropin from pituitary gland. Induces NLRP6 in intestinal epithelial cells, hence may influence gut microbiota profile. This Sus scrofa (Pig) protein is Corticoliberin (CRH).